The primary structure comprises 166 residues: Large ribosomal subunit protein uL10 (166 aa).

It belongs to the universal ribosomal protein uL10 family. As to quaternary structure, part of the ribosomal stalk of the 50S ribosomal subunit. The N-terminus interacts with L11 and the large rRNA to form the base of the stalk. The C-terminus forms an elongated spine to which L12 dimers bind in a sequential fashion forming a multimeric L10(L12)X complex.

Functionally, forms part of the ribosomal stalk, playing a central role in the interaction of the ribosome with GTP-bound translation factors. The protein is Large ribosomal subunit protein uL10 of Bacillus velezensis (strain DSM 23117 / BGSC 10A6 / LMG 26770 / FZB42) (Bacillus amyloliquefaciens subsp. plantarum).